The following is a 376-amino-acid chain: Pyrimidine monooxygenase RutA (376 aa).

FMN is bound by residues isoleucine 61–lysine 62, asparagine 127, glutamate 136, arginine 152–tyrosine 153, and serine 202.

Belongs to the NtaA/SnaA/DszA monooxygenase family. RutA subfamily.

The catalysed reaction is uracil + FMNH2 + NADH + O2 = (Z)-3-ureidoacrylate + FMN + NAD(+) + H2O + H(+). It catalyses the reaction thymine + FMNH2 + NADH + O2 = (Z)-2-methylureidoacrylate + FMN + NAD(+) + H2O + H(+). In terms of biological role, catalyzes the pyrimidine ring opening between N-3 and C-4 by an unusual flavin hydroperoxide-catalyzed mechanism, adding oxygen atoms in the process to yield ureidoacrylate peracid, that immediately reacts with FMN forming ureidoacrylate and FMN-N(5)-oxide. The FMN-N(5)-oxide reacts spontaneously with NADH to produce FMN. Requires the flavin reductase RutF to regenerate FMN in vivo. The protein is Pyrimidine monooxygenase RutA of Methylorubrum populi (strain ATCC BAA-705 / NCIMB 13946 / BJ001) (Methylobacterium populi).